The following is a 198-amino-acid chain: Probable GTP-binding protein EngB (198 aa).

Residues 22-196 enclose the EngB-type G domain; sequence NLSEIAFVGR…WNWIKGQAEL (175 aa). GTP is bound by residues 30-37, 57-61, 75-78, 142-145, and 175-177; these read GRSNVGKS, GKTQT, DVPG, TKAD, and FSA. Mg(2+)-binding residues include Ser37 and Thr59.

It belongs to the TRAFAC class TrmE-Era-EngA-EngB-Septin-like GTPase superfamily. EngB GTPase family. It depends on Mg(2+) as a cofactor.

Functionally, necessary for normal cell division and for the maintenance of normal septation. The polypeptide is Probable GTP-binding protein EngB (Oenococcus oeni (strain ATCC BAA-331 / PSU-1)).